The sequence spans 544 residues: Protein nucleotidyltransferase YdiU (544 aa).

Residues G133, G135, R136, K155, D167, G168, R218, and R225 each contribute to the ATP site. The active-site Proton acceptor is the D294. Residues N295 and D304 each contribute to the Mg(2+) site. Position 304 (D304) interacts with ATP.

Belongs to the SELO family. It depends on Mg(2+) as a cofactor. The cofactor is Mn(2+).

It catalyses the reaction L-seryl-[protein] + ATP = 3-O-(5'-adenylyl)-L-seryl-[protein] + diphosphate. The catalysed reaction is L-threonyl-[protein] + ATP = 3-O-(5'-adenylyl)-L-threonyl-[protein] + diphosphate. It carries out the reaction L-tyrosyl-[protein] + ATP = O-(5'-adenylyl)-L-tyrosyl-[protein] + diphosphate. The enzyme catalyses L-histidyl-[protein] + UTP = N(tele)-(5'-uridylyl)-L-histidyl-[protein] + diphosphate. It catalyses the reaction L-seryl-[protein] + UTP = O-(5'-uridylyl)-L-seryl-[protein] + diphosphate. The catalysed reaction is L-tyrosyl-[protein] + UTP = O-(5'-uridylyl)-L-tyrosyl-[protein] + diphosphate. Functionally, nucleotidyltransferase involved in the post-translational modification of proteins. It can catalyze the addition of adenosine monophosphate (AMP) or uridine monophosphate (UMP) to a protein, resulting in modifications known as AMPylation and UMPylation. This Cupriavidus metallidurans (strain ATCC 43123 / DSM 2839 / NBRC 102507 / CH34) (Ralstonia metallidurans) protein is Protein nucleotidyltransferase YdiU.